The sequence spans 422 residues: Cytokine receptor-like factor 1 (422 aa).

Residues 1 to 37 form the signal peptide; the sequence is MPAGRRGPAAQSARRPPPLLPLLLLLCVLGAPRAGSG. Residues 38–131 enclose the Ig-like C2-type domain; that stretch reads AHTAVISPQD…SILAGSCLYV (94 aa). Asn92, Asn104, and Asn140 each carry an N-linked (GlcNAc...) asparagine glycan. 2 consecutive Fibronectin type-III domains span residues 137-232 and 237-341; these read KPVN…ILDV and PPPD…TPRS. A disulfide bridge connects residues Cys143 and Cys153. Residue Asn168 is glycosylated (N-linked (GlcNAc...) asparagine). Cys184 and Cys195 are disulfide-bonded. Position 219 is a phosphoserine (Ser219). Asn292 is a glycosylation site (N-linked (GlcNAc...) asparagine). Residues 327-331 carry the WSXWS motif motif; it reads WSEWS. The segment at 332-363 is disordered; the sequence is HPTAASTPRSERPGPGGGACEPRGGEPSSGPV. Asn382 carries an N-linked (GlcNAc...) asparagine glycan. The interval 399–422 is disordered; sequence HKTRNQDEGILPSGRRGTARGPAR.

Belongs to the type I cytokine receptor family. Type 3 subfamily. As to quaternary structure, forms covalent di- and tetramers. Forms a heteromeric complex with cardiotrophin-like cytokine CLCF1/CLC; the CRLF1-CLCF1 complex is a ligand for the ciliary neurotrophic factor receptor/CNTFR. The CRLF1-CLCF1 heterodimer binds SORL1 (via N-terminal ectodomain); within this complex, the interaction is mediated predominantly by the CRLF1 moiety. The tripartite signaling complex formed by CRLF1, CLCF1 and CNTFR also binds SORL1. In terms of tissue distribution, highest levels of expression observed in spleen, thymus, lymph node, appendix, bone marrow, stomach, placenta, heart, thyroid and ovary. Strongly expressed also in fetal lung.

The protein resides in the secreted. In terms of biological role, in complex with CLCF1, forms a heterodimeric neurotropic cytokine that plays a crucial role during neuronal development. May also play a regulatory role in the immune system. In Homo sapiens (Human), this protein is Cytokine receptor-like factor 1 (CRLF1).